A 232-amino-acid chain; its full sequence is uncharacterized protein (232 aa).

Helical transmembrane passes span 4 to 24 (LLGVFFVPIIPFSFVVDYVFE), 42 to 62 (VLVGALGVGKAGTLLILLAVL), 100 to 120 (LFFISAFAIPLTVIHFLILHM), 145 to 165 (LAFVALVSSLVIAPAYAFFTL), and 171 to 191 (GNLILTPILLIEWLVWLWVGF).

It is found in the cell membrane. This is an uncharacterized protein from Aquifex aeolicus (strain VF5).